We begin with the raw amino-acid sequence, 217 residues long: Ribonuclease T (217 aa).

One can recognise an Exonuclease domain in the interval 20–195 (VVVDVETAGF…YDTEKTAELF (176 aa)). Asp23, Glu25, His182, and Asp187 together coordinate Mg(2+). His182 serves as the catalytic Proton donor/acceptor.

Belongs to the RNase T family. As to quaternary structure, homodimer. Mg(2+) serves as cofactor.

Trims short 3' overhangs of a variety of RNA species, leaving a one or two nucleotide 3' overhang. Responsible for the end-turnover of tRNA: specifically removes the terminal AMP residue from uncharged tRNA (tRNA-C-C-A). Also appears to be involved in tRNA biosynthesis. The polypeptide is Ribonuclease T (Vibrio vulnificus (strain CMCP6)).